The sequence spans 195 residues: CASP-like protein 1B2 (195 aa).

Topologically, residues 1–25 are cytoplasmic; it reads MDLEKGKKPSEQAAACRIMQVKDKL. Residues 26–46 traverse the membrane as a helical segment; it reads ITLQPVVRACVFLATAVAAVI. The Extracellular segment spans residues 47–78; that stretch reads MGLNKQSYTTVVAIVGTRPVTQTFTAKFKDTP. Residues 79-99 form a helical membrane-spanning segment; sequence AFVFFVIANAIASGYNLMVLV. The Cytoplasmic portion of the chain corresponds to 100–114; that stretch reads TRRILQRRAQSLSVH. A helical transmembrane segment spans residues 115 to 135; the sequence is LLDMVILTLLATGSATAASMA. Over 136-160 the chain is Extracellular; sequence QLGKNGNLHARWNPICDKFGSFCNH. Residues 161 to 181 traverse the membrane as a helical segment; that stretch reads GGIALVSSFIGVALMLALNLL. The Cytoplasmic segment spans residues 182–195; it reads SAAANSPRSNVTGQ.

This sequence belongs to the Casparian strip membrane proteins (CASP) family. In terms of assembly, homodimer and heterodimers.

It localises to the cell membrane. In Oryza sativa subsp. indica (Rice), this protein is CASP-like protein 1B2.